The following is a 209-amino-acid chain: Imidazoleglycerol-phosphate dehydratase (209 aa).

The disordered stretch occupies residues 1–23 (MQLSDRPLTAPGTAPRQATVSRR).

This sequence belongs to the imidazoleglycerol-phosphate dehydratase family.

Its subcellular location is the cytoplasm. The enzyme catalyses D-erythro-1-(imidazol-4-yl)glycerol 3-phosphate = 3-(imidazol-4-yl)-2-oxopropyl phosphate + H2O. It participates in amino-acid biosynthesis; L-histidine biosynthesis; L-histidine from 5-phospho-alpha-D-ribose 1-diphosphate: step 6/9. The sequence is that of Imidazoleglycerol-phosphate dehydratase from Synechococcus elongatus (strain ATCC 33912 / PCC 7942 / FACHB-805) (Anacystis nidulans R2).